The sequence spans 341 residues: Nucleoid-associated protein Sden_2335 (341 aa).

Belongs to the YejK family.

Its subcellular location is the cytoplasm. The protein resides in the nucleoid. The polypeptide is Nucleoid-associated protein Sden_2335 (Shewanella denitrificans (strain OS217 / ATCC BAA-1090 / DSM 15013)).